We begin with the raw amino-acid sequence, 66 residues long: Sarcoplasmic/endoplasmic reticulum calcium ATPase regulator ARLN (66 aa).

An N-acetylmethionine modification is found at Met1. Residues 1–38 form a disordered region; sequence MEVDVPGVDGRDGLRERRGLSEGGRQNLDVRPQSGANG. Basic and acidic residues predominate over residues 9–20; the sequence is DGRDGLRERRGL. Residues 45-65 traverse the membrane as a helical segment; the sequence is WLDLWLFIFFDVVVFLFVYFL.

As to quaternary structure, homooligomer. Can also form heterooligomers with other sarcoplasmic/endoplasmic reticulum calcium ATPase (SERCA) regulators ERLN, PLN, SLN and STRIT1/DWORF. Monomer. Interacts as a monomer with ATP2A2/SERCA2; the interaction results in inhibition of ATP2A2 Ca(2+) affinity.

Its subcellular location is the endoplasmic reticulum membrane. Inhibits the activity of the calcium ATPases ATP2A2/SERCA2 and ATP2A3/SERCA3 by decreasing their apparent affinity for Ca(2+). The chain is Sarcoplasmic/endoplasmic reticulum calcium ATPase regulator ARLN (ARLN) from Pongo abelii (Sumatran orangutan).